The chain runs to 192 residues: Ion-translocating oxidoreductase complex subunit B (192 aa).

The hydrophobic stretch occupies residues 1–26 (MNTIWIAVGALALLGLVFGAILGYAS). A 4Fe-4S domain is found at 32–91 (EDDPVVEKIDAILPQSQCGQCGYPGCRPYAEAVGLQGEKINRCAPGGEAVMLKIAELLNV). Residues cysteine 49, cysteine 52, cysteine 57, cysteine 74, cysteine 117, cysteine 120, cysteine 123, cysteine 127, cysteine 147, cysteine 150, cysteine 153, and cysteine 157 each contribute to the [4Fe-4S] cluster site. 2 4Fe-4S ferredoxin-type domains span residues 108-137 (MLAVIDENNCIGCTKCIQACPVDAIVGATR) and 138-167 (AMHTVMSDLCTGCNLCVDPCPTHCIELRPV).

It belongs to the 4Fe4S bacterial-type ferredoxin family. RnfB subfamily. As to quaternary structure, the complex is composed of six subunits: RsxA, RsxB, RsxC, RsxD, RsxE and RsxG. The cofactor is [4Fe-4S] cluster.

The protein resides in the cell inner membrane. Part of a membrane-bound complex that couples electron transfer with translocation of ions across the membrane. Required to maintain the reduced state of SoxR. The chain is Ion-translocating oxidoreductase complex subunit B from Salmonella newport (strain SL254).